Reading from the N-terminus, the 268-residue chain is Eukaryotic translation initiation factor 2 subunit beta (268 aa).

Over residues 1–12 the composition is skewed to basic and acidic residues; sequence MADEINEIREEQ. Residues 1–85 are disordered; sequence MADEINEIRE…LNNESVDAGE (85 aa). A2 carries the N-acetylalanine modification. S42, S80, and S112 each carry phosphoserine; by CK2. The C4-type zinc-finger motif lies at 222 to 246; the sequence is CLGCKSPDTILSKENRLFFLRCEKC.

This sequence belongs to the eIF-2-beta/eIF-5 family. In terms of assembly, eukaryotic translation initiation factor 2 eIF2 is a heterotrimeric complex composed of an alpha, a beta and a gamma subunit. Post-translationally, phosphorylated at Ser-42, Ser-80 and Ser-112 by CK2.

The protein resides in the cytoplasm. The protein localises to the cytosol. Its function is as follows. Component of the eIF2 complex that functions in the early steps of protein synthesis by forming a ternary complex with GTP and initiator tRNA. This complex binds to a 40S ribosomal subunit, followed by mRNA binding to form a 43S pre-initiation complex (43S PIC). Junction of the 60S ribosomal subunit to form the 80S initiation complex is preceded by hydrolysis of the GTP bound to eIF2 and release of an eIF2-GDP binary complex. In order for eIF2 to recycle and catalyze another round of initiation, the GDP bound to eIF2 must exchange with GTP by way of a reaction catalyzed by eIF2B. The protein is Eukaryotic translation initiation factor 2 subunit beta of Arabidopsis thaliana (Mouse-ear cress).